The sequence spans 131 residues: C-glycoside deglycosidase beta subunit (131 aa).

The protein belongs to the C-glycoside deglycosidase beta subunit family. Heterodimer composed of an alpha subunit (CarB1) and a beta subunit (CarC1). Mg(2+) is required as a cofactor.

It catalyses the reaction 3''-dehydroisovitexin = 1,5-anhydro-D-erythro-hex-1-en-3-ulose + apigenin. With respect to regulation, activity is strongly reduced in the presence of chelating agents. In terms of biological role, carbon-carbon bond-cleaving enzyme which participates in the metabolism of C-glycosides. Acts on the C6-glycosylated compound 3''-dehydroisovitexin (3''-oxo-isovitexin). Shows weak activity with 3''-dehydroisoorientin (3''-oxo-homoorientin) and 3'-dehydromangiferin (3'-oxo-mangiferin). The sequence is that of C-glycoside deglycosidase beta subunit from Arthrobacter globiformis (strain ATCC 8010 / DSM 20124 / JCM 1332 / NBRC 12137 / NCIMB 8907 / NRRL B-2979 / 168).